We begin with the raw amino-acid sequence, 1124 residues long: MSWLSRLNPRGPGTRTGRHAAPSSPCTADPETCLMVFENHWRQVSGVLKQRESSVGGFADDLTAVRNHTDQMLCLLAEERPAGGDIDSPAMGPILEMVVAENILEELVQWHVCRGLDPDSQLELLKLFEMLIGQSHQPLLLHSAVLQPLLSLLGACVDPQMGCPPALESSLVLLLNQVCVSMAKETAVLELLFRCGSVQQGPTNLLIFSLLVPFIHRDGALGQQARDALLLVMATSASNHAVARHITENSYFCPVLATGLSGLYSSLPRKIEVRGDDWHALRREDWIGVSSLVLFMNSLEFCNAVVQVAHPLVRCQLLDYLHNGFLVPVMGPALHKSSVDEMIASTAYLDLFLRCITETSLLKTFLRFILLHHHDNDTILDTLLTRISSNSRLCMVSLSLFKTLLSLNCEDLMLQLVLRYLLPCTHVMLSQRRAVRETDLYGKSADKFLSLIPECCRITSAPSGERDEEPAFWGKVLGSPTSESPVHPRPSTPSRLALFIRQQSSGGQANPSSSGSENAPSSPRGSVSSPLSPDSPMHQLSDFSEGETGYLEYLRDARKGIELCSWGCRDWSAPYDGENPSPNSAPLPPPPPTSNPSLSMVQEHFSVMDPTQQRAAVVAAARAEWSSSDRDSGEWDVTISKNCISLTPRSKKRSLLPSSIPLQSSSSASVSTEITGASETVYQHSRSTPHPALYNGMGQVEFTDSVDERMEAKKVKRDSDVNSGMVETGMNGSMGPVDYNDFHVGSTLKSSQVQLKPHLQHHTSVPSSTQECLPTESHRLSPVLGLTESSAASRGSESVERLIEELLERAPSEPLSGDSKCQGISIEAFHQELRELEERVRERRVSSRSSEESSRESRTAPLPSLTDEDCLPVETEQRSSETKPDSSTTGVFSPARPLGQPLAQPYTGPFITVLFSKLENMMQNSLYVNILLTGVVFQLACYPQPLLRSFLLNANMVFQPSVKSLIQVLGTVKNRIEVFAAAHEDFPAMLRKARRFLVARGKLDWSDSAMGVPSLRRSDSLIKSRKPSLGDLILRHTNSPTRARHAAQLALAHVRDGGQSLHSALFRGSAASGASGLEKQAEALRVKNAVYCAVIFSEFLKELAALAQEHAVALPFPPSQGTEE.

Disordered regions lie at residues 1-25 (MSWL…PSSP), 461-542 (APSG…QLSD), 577-599 (GENP…PSLS), 713-732 (KKVK…GMNG), and 838-900 (ERVR…PLGQ). The segment covering 509 to 532 (ANPSSSGSENAPSSPRGSVSSPLS) has biased composition (low complexity). Positions 583–594 (NSAPLPPPPPTS) are enriched in pro residues. 2 stretches are compositionally biased toward basic and acidic residues: residues 838–858 (ERVR…RESR) and 875–884 (TEQRSSETKP).

This sequence belongs to the FHIP family. Component of the FTS/Hook/FHIP complex (FHF complex), composed of AKTIP/FTS, FHIP1B, and one or more members of the Hook family of proteins HOOK1, HOOK2, and HOOK3. The FHF complex associates with the homotypic vesicular sorting complex (the HOPS complex).

Its function is as follows. Component of the FTS/Hook/FHIP complex (FHF complex). The FHF complex may function to promote vesicle trafficking and/or fusion via the homotypic vesicular protein sorting complex (the HOPS complex). FHF complex promotes the distribution of AP-4 complex to the perinuclear area of the cell. The polypeptide is FHF complex subunit HOOK-interacting protein 1B (fhip1b) (Danio rerio (Zebrafish)).